A 171-amino-acid polypeptide reads, in one-letter code: Shikimate kinase (171 aa).

ATP is bound at residue 14–19 (GAGKST). S18 contributes to the Mg(2+) binding site. Residues D36, R60, and G82 each coordinate substrate. Residue R120 participates in ATP binding. R139 is a substrate binding site. Position 156 (Q156) interacts with ATP.

It belongs to the shikimate kinase family. As to quaternary structure, monomer. Mg(2+) is required as a cofactor.

It localises to the cytoplasm. The catalysed reaction is shikimate + ATP = 3-phosphoshikimate + ADP + H(+). The protein operates within metabolic intermediate biosynthesis; chorismate biosynthesis; chorismate from D-erythrose 4-phosphate and phosphoenolpyruvate: step 5/7. In terms of biological role, catalyzes the specific phosphorylation of the 3-hydroxyl group of shikimic acid using ATP as a cosubstrate. The chain is Shikimate kinase from Shewanella amazonensis (strain ATCC BAA-1098 / SB2B).